The sequence spans 242 residues: Tropomyosin-1 (242 aa).

2 disordered regions span residues 1–31 and 65–96; these read MDAIKKKMSAMKTKLEEADKQAQDAEDELTA and TSLTEKYNEEEKKAEEGRRAHKELENRGQTDY. Residues 1–242 adopt a coiled-coil conformation; it reads MDAIKKKMSA…DELLLELASM (242 aa). 2 stretches are compositionally biased toward basic and acidic residues: residues 13-23 and 70-96; these read TKLEEADKQAQ and KYNEEEKKAEEGRRAHKELENRGQTDY.

The protein belongs to the tropomyosin family. As to quaternary structure, homodimer. In terms of tissue distribution, expressed ubiquitously.

This is Tropomyosin-1 (TPM1) from Podocoryna carnea (Hydrozoan).